The chain runs to 337 residues: PHD finger protein 11 (337 aa).

A C2HC pre-PHD-type zinc finger spans residues 42–78 (KRICALCPKDLECSVLYFAQSENIAAHENCLLYSSAL). Residues 108 to 160 (LKCTFCGKKGATVGCDLKSCFKNYHFFCAKNDHAVLQADGRTGIYKVFCQQHA) form a PHD-type zinc finger.

As to quaternary structure, interacts with BRCA1 and RELA.

The protein resides in the nucleus. Positive regulator of Th1-type cytokine gene expression. This Bos taurus (Bovine) protein is PHD finger protein 11 (PHF11).